A 283-amino-acid chain; its full sequence is Coiled-coil domain-containing protein 107 (283 aa).

An N-terminal signal peptide occupies residues 1–24 (MAGAVSLLGVVGLLLVSALSGVLG). The disordered stretch occupies residues 30 to 62 (DLRAHPGNAAHPGSGATEPRRRPPLKDQRERTR). Positions 47 to 62 (EPRRRPPLKDQRERTR) are enriched in basic and acidic residues. A helical transmembrane segment spans residues 65–85 (SLPLGALYTAAVAAFVLYKCL). Residues 104–134 (LQSEQQLAQLTQQLAQTEQHLNNLMAQLDPL) are a coiled coil. Disordered stretches follow at residues 164–207 (KPDK…SRPL) and 258–283 (AKGP…SLFS). Residues 176–187 (EGSGGESAGGGD) are compositionally biased toward gly residues.

It is found in the membrane. The chain is Coiled-coil domain-containing protein 107 (CCDC107) from Homo sapiens (Human).